Here is a 575-residue protein sequence, read N- to C-terminus: MKLTDVDFAVEASGMVRAFNQAGVLDVSDVHVAQRLCALAGESDERVALAVAVAVRALRAGSVCVDLLSIARVAGHDDLPWPDPADWLAAVRASPLLADPPVLHLYDDRLLYLDRYWREEEQVCADLLALLTSRRPAGVPDLRRLFPTGFDEQRRAAEIALSQGVTVLTGGPGTGKTTTVARLLALVAEQAELAGEPRPRIALAAPTGKAAARLAEAVRREMAKLDATDRARLGDLHAVTLHRLLGAKPGARFRQDRQNRLPHNVIVVDETSMVSLTLMARLAEAVRPGARLILVGDADQLASVEAGAVLADLVDGFSVRDDALVAQLRTSHRFGKVIGTLAEAIRAGDGDAVLGLLRSGEERIEFVDDEDPAPRLRAVLVPHALRLREAALLGASDVALATLDEHRLLCAHRDGPTGVLHWNRRVQAWLAEETGQPPWTPWYAGRPLLVTANDYGLRVYNGDTGVVLAGPTGLRAVISGASGPLDVATGRLGDVETMHAMTIHKSQGSQVDEVTVLMPQEDSRLLTRELLYTAVTRAKRKVRVVGSEASVRAAIARRAVRASGLRMRLQSTGCG.

170 to 177 (GGPGTGKT) lines the ATP pocket.

This sequence belongs to the RecD family. In terms of assembly, heterotrimer of RecB, RecC and RecD. All subunits contribute to DNA-binding.

The enzyme catalyses Couples ATP hydrolysis with the unwinding of duplex DNA at the replication fork by translocating in the 5'-3' direction. This creates two antiparallel DNA single strands (ssDNA). The leading ssDNA polymer is the template for DNA polymerase III holoenzyme which synthesizes a continuous strand.. It carries out the reaction ATP + H2O = ADP + phosphate + H(+). Its function is as follows. A helicase/nuclease that prepares dsDNA breaks (DSB) for recombinational DNA repair. Binds to DSBs and unwinds DNA via a highly rapid and processive ATP-dependent bidirectional helicase activity. Holoenzyme degrades any linearized DNA that is unable to undergo homologous recombination. In the holoenzyme this subunit has ssDNA-dependent ATPase and 5'-3' helicase activity. When added to pre-assembled RecBC greatly stimulates nuclease activity and augments holoenzyme processivity. Unlike the case in E.coli, suppresses RecA-dependent homologous recombination, is instead required for single-strand annealing pathway repair of DSB. A helicase/nuclease that prepares dsDNA breaks (DSB) for recombinational DNA repair. Binds to DSBs and unwinds DNA via a highly rapid and processive ATP-dependent bidirectional helicase activity. Unwinds dsDNA until it encounters a Chi (crossover hotspot instigator) sequence from the 3' direction. Cuts ssDNA a few nucleotides 3' to the Chi site. The properties and activities of the enzyme are changed at Chi. The Chi-altered holoenzyme produces a long 3'-ssDNA overhang and facilitates RecA-binding to the ssDNA for homologous DNA recombination and repair. Holoenzyme degrades any linearized DNA that is unable to undergo homologous recombination. In the holoenzyme this subunit has ssDNA-dependent ATPase and 5'-3' helicase activity. When added to pre-assembled RecBC greatly stimulates nuclease activity and augments holoenzyme processivity. Negatively regulates the RecA-loading ability of RecBCD. The sequence is that of RecBCD enzyme subunit RecD from Mycobacterium tuberculosis (strain CDC 1551 / Oshkosh).